The sequence spans 569 residues: Acyl-CoA transferase FVEG_12629 (569 aa).

It belongs to the CoA-transferase III family.

Its function is as follows. Acyl-CoA transferase; part of the Fusarium detoxification of benzoxazolinone cluster 2 (FDB2) involved in the degradation of benzoxazolinones produced by the host plant. Maize, wheat, and rye produce the 2 benzoxazinone phytoanticipins 2,4-dihy-droxy-7-methoxy-1,4-benzoxazin-3-one (DIMBOA) and 2,4-dihydroxy-1,4-benzoxazin-3-one (DIBOA) that, due to their inherent instability once released, spontaneously degrade to the more stable corresponding benzoxazolinones, 6-methoxy-2-benzoxazolinone (MBOA) and 2-benzoxazolinone (BOA), respectively. The first step in the detoxification of benzoxazolinones involves the hydrolysis of the cyclic ester bond of benzoxazolinones by the FDB1 cluster gamma-lactamase MBL1 to aminophenols. MBL1 is able to convert BOA into 2-aminophenol (2-AP), as well as MBOA into 5-methoxy-2-aminophenol (2-AMP). The FDB2 cluster N-malonyltransferase FDB2/NAT1 then metabolizes aminophenols via N-malonylation to non-toxic malonamic acids. FDB2/NAT1 converts 2-AP into N-(2-hydroxyphenyl) malonamic acid (HPMA) and 2-AMP into N-(2-hydroxy-4-methoxyphenyl) malonamic acid (HMPMA). The duplicated dienlactone hydrolases DLH1 and DLH2 may provide redundant function for hydrolyzing the lactone moiety in the BOA molecule. The roles of the amidases an other enzymes encoded by the 2 FDB clusters have not been identified so far. In Gibberella moniliformis (strain M3125 / FGSC 7600) (Maize ear and stalk rot fungus), this protein is Acyl-CoA transferase FVEG_12629.